The following is a 250-amino-acid chain: Hydroxyacylglutathione hydrolase (250 aa).

Zn(2+) contacts are provided by His53, His55, Asp57, His58, His110, Asp127, and His165.

The protein belongs to the metallo-beta-lactamase superfamily. Glyoxalase II family. As to quaternary structure, monomer. The cofactor is Zn(2+).

The catalysed reaction is an S-(2-hydroxyacyl)glutathione + H2O = a 2-hydroxy carboxylate + glutathione + H(+). Its pathway is secondary metabolite metabolism; methylglyoxal degradation; (R)-lactate from methylglyoxal: step 2/2. Functionally, thiolesterase that catalyzes the hydrolysis of S-D-lactoyl-glutathione to form glutathione and D-lactic acid. The sequence is that of Hydroxyacylglutathione hydrolase from Buchnera aphidicola subsp. Schizaphis graminum (strain Sg).